The chain runs to 631 residues: Phosphomethylpyrimidine synthase (631 aa).

Residues Asn-239, Met-268, Tyr-297, His-333, 353 to 355, 394 to 397, and Glu-433 each bind substrate; these read SRG and DGLR. His-437 contacts Zn(2+). Tyr-460 lines the substrate pocket. A Zn(2+)-binding site is contributed by His-501. Residues Cys-581, Cys-584, and Cys-589 each contribute to the [4Fe-4S] cluster site.

This sequence belongs to the ThiC family. As to quaternary structure, homodimer. Requires [4Fe-4S] cluster as cofactor.

The enzyme catalyses 5-amino-1-(5-phospho-beta-D-ribosyl)imidazole + S-adenosyl-L-methionine = 4-amino-2-methyl-5-(phosphooxymethyl)pyrimidine + CO + 5'-deoxyadenosine + formate + L-methionine + 3 H(+). It functions in the pathway cofactor biosynthesis; thiamine diphosphate biosynthesis. Catalyzes the synthesis of the hydroxymethylpyrimidine phosphate (HMP-P) moiety of thiamine from aminoimidazole ribotide (AIR) in a radical S-adenosyl-L-methionine (SAM)-dependent reaction. The chain is Phosphomethylpyrimidine synthase from Salmonella enteritidis PT4 (strain P125109).